The sequence spans 863 residues: DNA mismatch repair protein MutS 2 (863 aa).

626-633 (GPNMSGKS) contacts ATP.

It belongs to the DNA mismatch repair MutS family.

Its function is as follows. This protein is involved in the repair of mismatches in DNA. It is possible that it carries out the mismatch recognition step. This protein has a weak ATPase activity. This Halobacterium salinarum (strain ATCC 700922 / JCM 11081 / NRC-1) (Halobacterium halobium) protein is DNA mismatch repair protein MutS 2 (mutS2).